The chain runs to 269 residues: Phosphate import ATP-binding protein PstB 1 (269 aa).

The ABC transporter domain occupies 23 to 264 (LSTEDLNVYY…PKIKAAEDYV (242 aa)). Position 55–62 (55–62 (GASGSGKS)) interacts with ATP.

Belongs to the ABC transporter superfamily. Phosphate importer (TC 3.A.1.7) family. The complex is composed of two ATP-binding proteins (PstB), two transmembrane proteins (PstC and PstA) and a solute-binding protein (PstS).

Its subcellular location is the cell membrane. The enzyme catalyses phosphate(out) + ATP + H2O = ADP + 2 phosphate(in) + H(+). Part of the ABC transporter complex PstSACB involved in phosphate import. Responsible for energy coupling to the transport system. The polypeptide is Phosphate import ATP-binding protein PstB 1 (Latilactobacillus sakei subsp. sakei (strain 23K) (Lactobacillus sakei subsp. sakei)).